A 479-amino-acid polypeptide reads, in one-letter code: Aspartyl/glutamyl-tRNA(Asn/Gln) amidotransferase subunit B (479 aa).

It belongs to the GatB/GatE family. GatB subfamily. In terms of assembly, heterotrimer of A, B and C subunits.

It catalyses the reaction L-glutamyl-tRNA(Gln) + L-glutamine + ATP + H2O = L-glutaminyl-tRNA(Gln) + L-glutamate + ADP + phosphate + H(+). It carries out the reaction L-aspartyl-tRNA(Asn) + L-glutamine + ATP + H2O = L-asparaginyl-tRNA(Asn) + L-glutamate + ADP + phosphate + 2 H(+). In terms of biological role, allows the formation of correctly charged Asn-tRNA(Asn) or Gln-tRNA(Gln) through the transamidation of misacylated Asp-tRNA(Asn) or Glu-tRNA(Gln) in organisms which lack either or both of asparaginyl-tRNA or glutaminyl-tRNA synthetases. The reaction takes place in the presence of glutamine and ATP through an activated phospho-Asp-tRNA(Asn) or phospho-Glu-tRNA(Gln). The polypeptide is Aspartyl/glutamyl-tRNA(Asn/Gln) amidotransferase subunit B (Geotalea daltonii (strain DSM 22248 / JCM 15807 / FRC-32) (Geobacter daltonii)).